Consider the following 191-residue polypeptide: Calcium-activated potassium channel subunit beta-1 (191 aa).

Over 1–18 (MGKKLVMAQKRGETRALC) the chain is Cytoplasmic. A helical membrane pass occupies residues 19-39 (LGVAMVVCAAITYYILGTTVL). The Extracellular segment spans residues 40-155 (PLYQKSVWTQ…VVYQRLYGPQ (116 aa)). N-linked (GlcNAc...) asparagine glycosylation is found at N80 and N142. Residues 156-176 (ILLFSFFWPTFLLTGGLLIIA) form a helical membrane-spanning segment. Residues 177 to 191 (MVKLNRSLSVLAAQK) lie on the Cytoplasmic side of the membrane.

The protein belongs to the KCNMB (TC 8.A.14.1) family. KCNMB1 subfamily. As to quaternary structure, interacts with KCNMA1 tetramer. There are probably 4 molecules of KCMNB1 per KCNMA1 tetramer. In terms of processing, N-glycosylated. Weakly expressed. In brain, it is expressed in a few discrete populations of neurons that also express KCNMA1.

The protein localises to the membrane. Its function is as follows. Regulatory subunit of the calcium activated potassium KCNMA1 (maxiK) channel. Modulates the calcium sensitivity and gating kinetics of KCNMA1, thereby contributing to KCNMA1 channel diversity. Increases the apparent Ca(2+)/voltage sensitivity of the KCNMA1 channel. It also modifies KCNMA1 channel kinetics and alters its pharmacological properties. It slows down the activation and the deactivation kinetics of the channel. Acts as a negative regulator of smooth muscle contraction by enhancing the calcium sensitivity to KCNMA1. Its presence is also a requirement for internal binding of the KCNMA1 channel opener dehydrosoyasaponin I (DHS-1) triterpene glycoside and for external binding of the agonist hormone 17-beta-estradiol (E2). Increases the binding activity of charybdotoxin (CTX) toxin to KCNMA1 peptide blocker by increasing the CTX association rate and decreasing the dissociation rate. The protein is Calcium-activated potassium channel subunit beta-1 (Kcnmb1) of Rattus norvegicus (Rat).